Here is a 1280-residue protein sequence, read N- to C-terminus: SET and MYND domain-containing protein DDB_G0284059 (1280 aa).

2 disordered regions span residues 1-35 (MTKK…SHNH) and 111-167 (INKI…QKQQ). Composition is skewed to low complexity over residues 16–25 (NNNNNNNHGN) and 117–153 (ENSP…QSQP). 2 TPR repeats span residues 272-305 (SKGY…YDME) and 383-416 (HKLY…IEKR). A coiled-coil region spans residues 439-468 (QKDEEIEQELDNKNNNSNDDEKQQQQQQQQ). Residues cysteine 533, cysteine 536, cysteine 546, cysteine 549, cysteine 555, cysteine 559, histidine 568, and cysteine 572 each coordinate Zn(2+). The MYND-type zinc-finger motif lies at 533 to 572 (CYNCFKEILSPIYCKECSNSQYCSNKCLNEDYVKQHGREC). Disordered stretches follow at residues 601-642 (ANKG…QNLN), 659-726 (ALSS…TTTT), 854-905 (QQQQ…PFSP), and 1039-1079 (AKLQ…LNNN). Composition is skewed to low complexity over residues 659 to 697 (ALSS…SLTE), 712 to 726 (SSSS…TTTT), 854 to 898 (QQQQ…QNPP), 1042 to 1053 (QQQQQQQQQHQQ), and 1061 to 1079 (NSNP…LNNN). The 144-residue stretch at 822–965 (CQLTTYTFAI…KGEEILGCYG (144 aa)) folds into the SET domain. Residues 1218 to 1251 (GREYSKLGQIYLTLGEIEKSEDAIEKAESILMSW) form a TPR 3 repeat.

The protein belongs to the class V-like SAM-binding methyltransferase superfamily.

In terms of biological role, probable methyltransferase. The polypeptide is SET and MYND domain-containing protein DDB_G0284059 (Dictyostelium discoideum (Social amoeba)).